Consider the following 130-residue polypeptide: Putative protein ZNF815 (130 aa).

This is Putative protein ZNF815 (ZNF815P) from Homo sapiens (Human).